A 316-amino-acid polypeptide reads, in one-letter code: L-lactate dehydrogenase 3 (316 aa).

Positions 16, 37, 42, and 68 each coordinate NAD(+). Position 91 (arginine 91) interacts with substrate. NAD(+) contacts are provided by residues serine 104, 121–123, and threonine 146; that span reads ASN. 123-126 is a binding site for substrate; that stretch reads NPVD. 151 to 154 serves as a coordination point for substrate; that stretch reads DSSR. Residues arginine 156 and histidine 171 each contribute to the beta-D-fructose 1,6-bisphosphate site. Residue histidine 178 is the Proton acceptor of the active site. Threonine 233 contributes to the substrate binding site.

This sequence belongs to the LDH/MDH superfamily. LDH family. In terms of assembly, homotetramer.

The protein localises to the cytoplasm. The enzyme catalyses (S)-lactate + NAD(+) = pyruvate + NADH + H(+). It functions in the pathway fermentation; pyruvate fermentation to lactate; (S)-lactate from pyruvate: step 1/1. Its activity is regulated as follows. Allosterically activated by fructose 1,6-bisphosphate (FBP). Catalyzes the conversion of lactate to pyruvate. In Bacillus anthracis, this protein is L-lactate dehydrogenase 3.